A 65-amino-acid chain; its full sequence is DNA gyrase inhibitor YacG (65 aa).

4 residues coordinate Zn(2+): C9, C12, C28, and C32. The segment at 44–65 is disordered; the sequence is EKRIPSSSDLSESDDWSEEPKQ. Acidic residues predominate over residues 54–65; the sequence is SESDDWSEEPKQ.

Belongs to the DNA gyrase inhibitor YacG family. As to quaternary structure, interacts with GyrB. Zn(2+) serves as cofactor.

Inhibits all the catalytic activities of DNA gyrase by preventing its interaction with DNA. Acts by binding directly to the C-terminal domain of GyrB, which probably disrupts DNA binding by the gyrase. The protein is DNA gyrase inhibitor YacG of Escherichia coli O6:H1 (strain CFT073 / ATCC 700928 / UPEC).